Consider the following 315-residue polypeptide: Acetyl-coenzyme A carboxylase carboxyl transferase subunit alpha (315 aa).

The region spanning 39–293 (RLQDKSSTLT…RGELASQLAM (255 aa)) is the CoA carboxyltransferase C-terminal domain.

The protein belongs to the AccA family. As to quaternary structure, acetyl-CoA carboxylase is a heterohexamer composed of biotin carboxyl carrier protein (AccB), biotin carboxylase (AccC) and two subunits each of ACCase subunit alpha (AccA) and ACCase subunit beta (AccD).

The protein localises to the cytoplasm. The catalysed reaction is N(6)-carboxybiotinyl-L-lysyl-[protein] + acetyl-CoA = N(6)-biotinyl-L-lysyl-[protein] + malonyl-CoA. It functions in the pathway lipid metabolism; malonyl-CoA biosynthesis; malonyl-CoA from acetyl-CoA: step 1/1. In terms of biological role, component of the acetyl coenzyme A carboxylase (ACC) complex. First, biotin carboxylase catalyzes the carboxylation of biotin on its carrier protein (BCCP) and then the CO(2) group is transferred by the carboxyltransferase to acetyl-CoA to form malonyl-CoA. This chain is Acetyl-coenzyme A carboxylase carboxyl transferase subunit alpha, found in Pseudomonas fluorescens (strain SBW25).